Here is a 538-residue protein sequence, read N- to C-terminus: GSY2-interacting protein PIG2 (538 aa).

Residues Ser162, Ser196, Ser296, and Ser304 each carry the phosphoserine modification. The region spanning 384 to 508 (LNLSRGRPVF…NNDSANYKID (125 aa)) is the CBM21 domain.

In terms of biological role, interacts with glycogen synthase 2 (GSY2); possibly also interacts with phosphatase 1 (GLC7). The chain is GSY2-interacting protein PIG2 (PIG2) from Saccharomyces cerevisiae (strain ATCC 204508 / S288c) (Baker's yeast).